Consider the following 577-residue polypeptide: Peroxynitrite isomerase THAP4 (577 aa).

A THAP-type zinc finger spans residues 1–85 (MVICCAAVNC…LKPTAVPSIF (85 aa)). The disordered stretch occupies residues 84 to 221 (IFHLTEKKRG…DKSGISMDDF (138 aa)). Positions 157–170 (AAQEAASQEQAQQA) are enriched in low complexity. Phosphoserine is present on Ser-163. The short motif at 235–238 (LHSY) is the HCFC1-binding motif (HBM) element. At Ser-239 the chain carries Phosphoserine. The disordered stretch occupies residues 240 to 324 (FSSKHTRERP…AVQSEHSDAS (85 aa)). Basic and acidic residues predominate over residues 247-266 (ERPSVPREPIDRKRLKKDVE). The span at 290–300 (TATPQKPSQSP) shows a compositional bias: low complexity. The nitrobindin stretch occupies residues 415 to 577 (PPKMNPVVEP…LHVTYKKVTP (163 aa)). Residues Thr-444 and His-567 each contribute to the heme b site.

In the C-terminal section; belongs to the nitrobindin family. As to quaternary structure, homodimer. The cofactor is heme b.

The protein localises to the cytoplasm. It localises to the nucleus. It catalyses the reaction peroxynitrite = nitrate. Its pathway is nitrogen metabolism. Functionally, heme-binding protein able to scavenge peroxynitrite and to protect free L-tyrosine against peroxynitrite-mediated nitration, by acting as a peroxynitrite isomerase that converts peroxynitrite to nitrate. Therefore, this protein likely plays a role in peroxynitrite sensing and in the detoxification of reactive nitrogen and oxygen species (RNS and ROS, respectively). Is able to bind nitric oxide (NO) in vitro, but may act as a sensor of peroxynitrite levels in vivo, possibly modulating the transcriptional activity residing in the N-terminal region. In Homo sapiens (Human), this protein is Peroxynitrite isomerase THAP4.